Here is a 452-residue protein sequence, read N- to C-terminus: Bifunctional protein GlmU (452 aa).

The tract at residues 1-224 (MNIVILAAGM…VWETHGVNSK (224 aa)) is pyrophosphorylase. UDP-N-acetyl-alpha-D-glucosamine-binding positions include 6-9 (LAAG), K20, Q71, 76-77 (GT), 98-100 (YGD), G135, E149, N164, and N222. D100 serves as a coordination point for Mg(2+). N222 contributes to the Mg(2+) binding site. A linker region spans residues 225 to 245 (VQLAELERVHQNNIARALLEH). The interval 246 to 452 (GVTLADPARI…GWQRPVKIKK (207 aa)) is N-acetyltransferase. Residues R328 and K346 each coordinate UDP-N-acetyl-alpha-D-glucosamine. The Proton acceptor role is filled by H358. Y361 and N372 together coordinate UDP-N-acetyl-alpha-D-glucosamine. Acetyl-CoA-binding positions include A375, 381–382 (NY), S400, A418, and R435.

The protein in the N-terminal section; belongs to the N-acetylglucosamine-1-phosphate uridyltransferase family. It in the C-terminal section; belongs to the transferase hexapeptide repeat family. In terms of assembly, homotrimer. Mg(2+) serves as cofactor.

The protein localises to the cytoplasm. It catalyses the reaction alpha-D-glucosamine 1-phosphate + acetyl-CoA = N-acetyl-alpha-D-glucosamine 1-phosphate + CoA + H(+). The catalysed reaction is N-acetyl-alpha-D-glucosamine 1-phosphate + UTP + H(+) = UDP-N-acetyl-alpha-D-glucosamine + diphosphate. It participates in nucleotide-sugar biosynthesis; UDP-N-acetyl-alpha-D-glucosamine biosynthesis; N-acetyl-alpha-D-glucosamine 1-phosphate from alpha-D-glucosamine 6-phosphate (route II): step 2/2. Its pathway is nucleotide-sugar biosynthesis; UDP-N-acetyl-alpha-D-glucosamine biosynthesis; UDP-N-acetyl-alpha-D-glucosamine from N-acetyl-alpha-D-glucosamine 1-phosphate: step 1/1. It functions in the pathway bacterial outer membrane biogenesis; LPS lipid A biosynthesis. Its function is as follows. Catalyzes the last two sequential reactions in the de novo biosynthetic pathway for UDP-N-acetylglucosamine (UDP-GlcNAc). The C-terminal domain catalyzes the transfer of acetyl group from acetyl coenzyme A to glucosamine-1-phosphate (GlcN-1-P) to produce N-acetylglucosamine-1-phosphate (GlcNAc-1-P), which is converted into UDP-GlcNAc by the transfer of uridine 5-monophosphate (from uridine 5-triphosphate), a reaction catalyzed by the N-terminal domain. This is Bifunctional protein GlmU from Herminiimonas arsenicoxydans.